The chain runs to 307 residues: Elongation factor Ts (307 aa).

The involved in Mg(2+) ion dislocation from EF-Tu stretch occupies residues 79–82; it reads TDFV.

Belongs to the EF-Ts family.

It is found in the cytoplasm. Functionally, associates with the EF-Tu.GDP complex and induces the exchange of GDP to GTP. It remains bound to the aminoacyl-tRNA.EF-Tu.GTP complex up to the GTP hydrolysis stage on the ribosome. The polypeptide is Elongation factor Ts (Sinorhizobium medicae (strain WSM419) (Ensifer medicae)).